The sequence spans 181 residues: Protein TrbB (181 aa).

An N-terminal signal peptide occupies residues 1–22; it reads MSLTKSLLFTLLLSAAAVQAST. A Thioredoxin domain is found at 37–172; it reads TQPAQPAAGT…FMARVDTVLQ (136 aa).

It is found in the periplasm. The polypeptide is Protein TrbB (trbB) (Escherichia coli (strain K12)).